A 107-amino-acid polypeptide reads, in one-letter code: Small leucine-rich protein 1 (107 aa).

The next 2 membrane-spanning stretches (helical) occupy residues 19–39 (AALV…LAMS) and 53–73 (FLFF…IAYF). The tract at residues 85–107 (SQNCDRQHNPKDGSSLYQRMKWT) is disordered.

The protein resides in the membrane. This Homo sapiens (Human) protein is Small leucine-rich protein 1 (SMLR1).